The chain runs to 1050 residues: Ankyrin repeat domain-containing protein 27 (1050 aa).

The segment at 1 to 372 is sufficient for GEF activity towards RAB21; it reads MALYDEDLLK…RQGSLSAKPP (372 aa). One can recognise a VPS9 domain in the interval 233–371; it reads ASEDAAFNKI…IRQGSLSAKP (139 aa). ANK repeat units lie at residues 396-426, 462-491, 495-524, 528-560, 564-593, and 597-627; these read SPTD…DKDA, RGHT…VVNA, HGAT…SAEV, NGNT…RLDI, KGDT…SPEI, and LKET…RQKS. Residues 396–460 form a sufficient for interaction with VPS29 region; sequence SPTDCLFKHI…PSVVTPFSRD (65 aa). The tract at residues 451–600 is interaction with RAB38; it reads PSVVTPFSRD…PEIQNRLKET (150 aa). Residues 451–730 form an interaction with RAB32 region; sequence PSVVTPFSRD…APAQKRLAKV (280 aa). Residues 630 to 665 are disordered; sequence APVQSLQRSVDSISQESSTSSFSSMSAGSRQEETKK. Residues 638-658 show a composition bias toward low complexity; it reads SVDSISQESSTSSFSSMSAGS. The required for interaction with VAMP7 stretch occupies residues 658–707; the sequence is SRQEETKKDYREVEKLLRAVADGDLEMVRYLLEWTEEDLEDAEDTVSAVD. ANK repeat units lie at residues 668-698, 743-772, 776-805, 809-838, and 842-871; these read REVE…DLED, DGSS…NAGA, DQAV…KPNK, SGNT…AINT, and KGNT…SVQV. Residues 692–746 are sufficient for interaction with VPS29; it reads TEEDLEDAEDTVSAVDPEFCHPLCQCPKCAPAQKRLAKVPASGLGVNVTSQDGSS. A phosphoserine mark is found at Ser-962 and Ser-970. The tract at residues 987–1050 is disordered; the sequence is PAQSGSHAAE…TPQEVSASRS (64 aa). Over residues 994 to 1007 the composition is skewed to basic and acidic residues; it reads AAEKGNSDWPERPR. Thr-1023 is modified (phosphothreonine). The segment covering 1040-1050 has biased composition (polar residues); sequence STPQEVSASRS.

Interacts with RAB21 (GDP-bound form), VPS29, KIF5A, KIF5C, GOLGA4. Interacts with RAB32 (GTP-bound form), RAB38 (GTP-bound form), VAMP7. Interacts with low affinity with RAB5. ANKRD27:RAB32 heterodimers can homodimerize to form tetramers. Can interact with RAB38 or RAB32, VPS29 and VAMP7 simultaneously. A decreased interaction with RAB32 seen in the presence of SGSM2.

The protein localises to the early endosome. It is found in the late endosome. It localises to the cytoplasmic vesicle membrane. The protein resides in the lysosome. Its subcellular location is the cell membrane. The protein localises to the melanosome. Functionally, may be a guanine exchange factor (GEF) for Rab21, Rab32 and Rab38 and regulate endosome dynamics. May regulate the participation of VAMP7 in membrane fusion events; in vitro inhibits VAMP7-mediated SNARE complex formation by trapping VAMP7 in a closed, fusogenically inactive conformation. Involved in peripheral melanosomal distribution of TYRP1 in melanocytes; the function, which probably is implicating vesicle-trafficking, includes cooperation with Rab32, Rab38 and VAMP7. Involved in the regulation of neurite growth; the function seems to require its GEF activity, probably towards Rab21, and VAMP7 but not Rab32/38. Proposed to be involved in Golgi sorting of VAMP7 and transport of VAMP7 vesicles to the cell surface; the function seems to implicate kinesin heavy chain isoform 5 proteins, GOLGA4, RAB21 and MACF1. Required for the colocalization of VAMP7 and Rab21, probably on TGN sites. Involved in GLUT1 endosome-to-plasma membrane trafficking; the function is dependent of association with VPS29. Regulates the proper trafficking of melanogenic enzymes TYR, TYRP1 and DCT/TYRP2 to melanosomes in melanocytes. In Pongo abelii (Sumatran orangutan), this protein is Ankyrin repeat domain-containing protein 27 (ANKRD27).